A 367-amino-acid polypeptide reads, in one-letter code: Metacaspase-1 (367 aa).

Residues 47-77 (DPRTAPPPQPSSAPSPPPQIHAPPGQLPHPH) form a disordered region. Pro residues predominate over residues 50-73 (TAPPPQPSSAPSPPPQIHAPPGQL). Catalysis depends on residues histidine 164 and cysteine 220.

This sequence belongs to the peptidase C14B family. As to quaternary structure, interacts (via N-terminus) with LSD1. Proteolytically processed; by an autocatalytic mechanism.

Cysteine protease that cleaves specifically after arginine or lysine residues. Does not cleave caspase-specific substrates. Acts as a positive regulator of cell death. Required for both oxidative stress cell death response and hypersensitive cell death response mediated by immune response. This is Metacaspase-1 (AMC1) from Arabidopsis thaliana (Mouse-ear cress).